The sequence spans 138 residues: Cysteine desulfuration protein SufE (138 aa).

The active-site Cysteine persulfide intermediate is C51.

This sequence belongs to the SufE family. In terms of assembly, homodimer. Interacts with SufS.

It is found in the cytoplasm. It functions in the pathway cofactor biosynthesis; iron-sulfur cluster biosynthesis. Participates in cysteine desulfuration mediated by SufS. Cysteine desulfuration mobilizes sulfur from L-cysteine to yield L-alanine and constitutes an essential step in sulfur metabolism for biosynthesis of a variety of sulfur-containing biomolecules. Functions as a sulfur acceptor for SufS, by mediating the direct transfer of the sulfur atom from the S-sulfanylcysteine of SufS, an intermediate product of cysteine desulfuration process. The chain is Cysteine desulfuration protein SufE from Escherichia coli (strain K12 / MC4100 / BW2952).